Reading from the N-terminus, the 248-residue chain is Glutaredoxin domain-containing cysteine-rich protein 2 (248 aa).

2 stretches are compositionally biased toward basic and acidic residues: residues 1 to 16 and 157 to 172; these read MEDP…DGKP and LMNK…QHDR. Disordered stretches follow at residues 1 to 20 and 150 to 172; these read MEDP…RKVR and EEAE…QHDR.

It belongs to the GRXCR2 family. Interacts with TPRN; the interaction restricts TPRN to the stereocilum basal region.

The protein localises to the cell projection. The protein resides in the stereocilium. Required for hearing. Plays a role in maintaining cochlear stereocilia bundles that are involved in sound detection. Ensures the restriction of TPRN to the basal region of stereocilia in hair cells. This is Glutaredoxin domain-containing cysteine-rich protein 2 (GRXCR2) from Homo sapiens (Human).